A 195-amino-acid chain; its full sequence is Imidazoleglycerol-phosphate dehydratase (195 aa).

The protein belongs to the imidazoleglycerol-phosphate dehydratase family.

Its subcellular location is the cytoplasm. The enzyme catalyses D-erythro-1-(imidazol-4-yl)glycerol 3-phosphate = 3-(imidazol-4-yl)-2-oxopropyl phosphate + H2O. The protein operates within amino-acid biosynthesis; L-histidine biosynthesis; L-histidine from 5-phospho-alpha-D-ribose 1-diphosphate: step 6/9. The protein is Imidazoleglycerol-phosphate dehydratase of Polynucleobacter asymbioticus (strain DSM 18221 / CIP 109841 / QLW-P1DMWA-1) (Polynucleobacter necessarius subsp. asymbioticus).